Here is a 271-residue protein sequence, read N- to C-terminus: Structure-specific endonuclease subunit SLX1 (271 aa).

The region spanning 9 to 94 is the GIY-YIG domain; that stretch reads RFFGVYLLYC…PQASRRLTHV (86 aa). The SLX1-type zinc finger occupies 182–234; the sequence is CTLCARMLQDEEGPLCCPHPGCPLRAHIICLAEEFLQEEPGQLLPLEGHCPSC.

Belongs to the SLX1 family. In terms of assembly, forms a heterodimer with SLX4. A divalent metal cation is required as a cofactor.

It is found in the nucleus. Its function is as follows. Catalytic subunit of the SLX1-SLX4 structure-specific endonuclease that resolves DNA secondary structures generated during DNA repair and recombination. Has endonuclease activity towards branched DNA substrates, introducing single-strand cuts in duplex DNA close to junctions with ss-DNA. Has a preference for 5'-flap structures, and promotes symmetrical cleavage of static and migrating Holliday junctions (HJs). Resolves HJs by generating two pairs of ligatable, nicked duplex products. This is Structure-specific endonuclease subunit SLX1 (Slx1b) from Rattus norvegicus (Rat).